The sequence spans 581 residues: NADH-quinone oxidoreductase subunit C/D (581 aa).

The interval methionine 1–phenylalanine 172 is NADH dehydrogenase I subunit C. Residues glutamate 196–arginine 581 are NADH dehydrogenase I subunit D.

The protein in the N-terminal section; belongs to the complex I 30 kDa subunit family. It in the C-terminal section; belongs to the complex I 49 kDa subunit family. NDH-1 is composed of 13 different subunits. Subunits NuoB, CD, E, F, and G constitute the peripheral sector of the complex.

Its subcellular location is the cell inner membrane. The enzyme catalyses a quinone + NADH + 5 H(+)(in) = a quinol + NAD(+) + 4 H(+)(out). Functionally, NDH-1 shuttles electrons from NADH, via FMN and iron-sulfur (Fe-S) centers, to quinones in the respiratory chain. The immediate electron acceptor for the enzyme in this species is believed to be ubiquinone. Couples the redox reaction to proton translocation (for every two electrons transferred, four hydrogen ions are translocated across the cytoplasmic membrane), and thus conserves the redox energy in a proton gradient. In Rhodopseudomonas palustris (strain TIE-1), this protein is NADH-quinone oxidoreductase subunit C/D.